Reading from the N-terminus, the 206-residue chain is MARYIGPKCKLARREGTDLFLKSGVRAIESKCNIEAAPGIHGQRRGRQSDYGTQLREKQKVRRIYGVLERQFSGYYKEAAGKKGATGENLLQLLECRLDNVVYRMGFGSTRAESRQLVSHKSVSVNGKTVNVPSYQVRAGDVVAIREKAKNQLRIVQALDLCAQRGRVEWVEVDTEKKSGVFKNVPARSDLSADINESLIVELYSK.

The region spanning 96-156 is the S4 RNA-binding domain; that stretch reads CRLDNVVYRM…EKAKNQLRIV (61 aa).

Belongs to the universal ribosomal protein uS4 family. In terms of assembly, part of the 30S ribosomal subunit. Contacts protein S5. The interaction surface between S4 and S5 is involved in control of translational fidelity.

Functionally, one of the primary rRNA binding proteins, it binds directly to 16S rRNA where it nucleates assembly of the body of the 30S subunit. Its function is as follows. With S5 and S12 plays an important role in translational accuracy. This is Small ribosomal subunit protein uS4 from Pseudomonas savastanoi pv. phaseolicola (strain 1448A / Race 6) (Pseudomonas syringae pv. phaseolicola (strain 1448A / Race 6)).